We begin with the raw amino-acid sequence, 537 residues long: CTP synthase (537 aa).

The segment at 1 to 267 (MAKYIFVTGG…DEYVIKRLNL (267 aa)) is amidoligase domain. A CTP-binding site is contributed by Ser-13. Ser-13 serves as a coordination point for UTP. 14–19 (SLGKGI) is an ATP binding site. Residue Tyr-54 participates in L-glutamine binding. ATP is bound at residue Asp-71. Mg(2+) is bound by residues Asp-71 and Glu-141. Residues 148–150 (DIE), 188–193 (KTKPTQ), and Lys-224 contribute to the CTP site. UTP contacts are provided by residues 188–193 (KTKPTQ) and Lys-224. 240-242 (RDV) contributes to the ATP binding site. The 243-residue stretch at 292-534 (EVALVGKYVD…VKAMLNLKIN (243 aa)) folds into the Glutamine amidotransferase type-1 domain. Residue Gly-354 participates in L-glutamine binding. The active-site Nucleophile; for glutamine hydrolysis is Cys-381. L-glutamine contacts are provided by residues 382–385 (LGMQ), Glu-405, and Arg-462. Active-site residues include His-507 and Glu-509.

The protein belongs to the CTP synthase family. Homotetramer.

The enzyme catalyses UTP + L-glutamine + ATP + H2O = CTP + L-glutamate + ADP + phosphate + 2 H(+). The catalysed reaction is L-glutamine + H2O = L-glutamate + NH4(+). It carries out the reaction UTP + NH4(+) + ATP = CTP + ADP + phosphate + 2 H(+). Its pathway is pyrimidine metabolism; CTP biosynthesis via de novo pathway; CTP from UDP: step 2/2. Allosterically activated by GTP, when glutamine is the substrate; GTP has no effect on the reaction when ammonia is the substrate. The allosteric effector GTP functions by stabilizing the protein conformation that binds the tetrahedral intermediate(s) formed during glutamine hydrolysis. Inhibited by the product CTP, via allosteric rather than competitive inhibition. In terms of biological role, catalyzes the ATP-dependent amination of UTP to CTP with either L-glutamine or ammonia as the source of nitrogen. Regulates intracellular CTP levels through interactions with the four ribonucleotide triphosphates. The polypeptide is CTP synthase (Caldanaerobacter subterraneus subsp. tengcongensis (strain DSM 15242 / JCM 11007 / NBRC 100824 / MB4) (Thermoanaerobacter tengcongensis)).